The following is a 139-amino-acid chain: Nucleoside diphosphate kinase (139 aa).

6 residues coordinate ATP: lysine 10, phenylalanine 58, arginine 86, threonine 92, arginine 103, and asparagine 113. Histidine 116 acts as the Pros-phosphohistidine intermediate in catalysis.

Belongs to the NDK family. As to quaternary structure, homotetramer. Mg(2+) serves as cofactor.

The protein localises to the cytoplasm. The enzyme catalyses a 2'-deoxyribonucleoside 5'-diphosphate + ATP = a 2'-deoxyribonucleoside 5'-triphosphate + ADP. It carries out the reaction a ribonucleoside 5'-diphosphate + ATP = a ribonucleoside 5'-triphosphate + ADP. Functionally, major role in the synthesis of nucleoside triphosphates other than ATP. The ATP gamma phosphate is transferred to the NDP beta phosphate via a ping-pong mechanism, using a phosphorylated active-site intermediate. The chain is Nucleoside diphosphate kinase from Caulobacter sp. (strain K31).